A 507-amino-acid chain; its full sequence is Protein phosphatase 1J (507 aa).

Disordered stretches follow at residues 1 to 102 and 197 to 220; these read MLNR…RLPW and LCLP…PQSC. Over residues 14–23 the composition is skewed to low complexity; it reads SSGGTSSQRS. Position 41 is a phosphothreonine (threonine 41). The span at 59 to 73 shows a compositional bias: polar residues; the sequence is TAETTVSFSRPTFLQ. Serine 65 and serine 75 each carry phosphoserine. A PPM-type phosphatase domain is found at 103–499; sequence STGYAEVINA…DDISVFVIPL (397 aa). The segment covering 199 to 212 has biased composition (low complexity); that stretch reads LPSTPGTPGAPSPS.

This sequence belongs to the PP2C family. As to quaternary structure, interacts with UBE2I/UBC9. Specifically expressed in the testicular germ cells.

The enzyme catalyses O-phospho-L-seryl-[protein] + H2O = L-seryl-[protein] + phosphate. It catalyses the reaction O-phospho-L-threonyl-[protein] + H2O = L-threonyl-[protein] + phosphate. In Mus musculus (Mouse), this protein is Protein phosphatase 1J (Ppm1j).